The primary structure comprises 298 residues: Cyclic dof factor 1 (298 aa).

The segment at 27–46 (EEEEKNQNKTLTDQSEKDKT) is disordered. The segment at 54-108 (LPCPRCNSMETKFCYYNNYNVNQPRHFCKACQRYWTSGGTMRSVPIGAGRRKNKN) adopts a Dof-type zinc-finger fold. Positions 56, 59, 81, and 84 each coordinate Zn(2+). Residues 200-231 (SSSPTSTLGKHSRDEDETVKQKQRNGSVLVPK) are disordered. Residues 210-219 (HSRDEDETVK) show a composition bias toward basic and acidic residues.

In terms of assembly, interacts with ADO2 (via kelch repeats), ADO3 (via kelch repeats) and GI (via N-terminus). Ubiquitinated. Expressed in the vascular tissues of cotyledons, leaves and hypocotyls and in stomata. Not detected in roots.

It is found in the nucleus. Functionally, transcription factor that binds specifically to a 5'-AA[AG]G-3' consensus core sequence. A flanking TGT sequence contributes to the specificity of binding. Regulates a photoperiodic flowering response. Transcriptional repressor of 'CONSTANS' expression. The DNA-binding ability is not modulated by 'GIGANTEA' but the stability of CDF1 is controlled by the proteasome-dependent pathway. Ubiquitinated by the SCF(ADO3) E3 ubiquitin ligase complex. Binds to the FT promoter in the morning. The chain is Cyclic dof factor 1 (CDF1) from Arabidopsis thaliana (Mouse-ear cress).